A 492-amino-acid chain; its full sequence is Ribose import ATP-binding protein RbsA (492 aa).

ABC transporter domains lie at 3 to 239 and 238 to 492; these read IDMR…VGRK and RKLE…TGGK. ATP is bound at residue 35 to 42; it reads GENGAGKS.

Belongs to the ABC transporter superfamily. Ribose importer (TC 3.A.1.2.1) family. As to quaternary structure, the complex is composed of an ATP-binding protein (RbsA), two transmembrane proteins (RbsC) and a solute-binding protein (RbsB).

The protein localises to the cell membrane. It carries out the reaction D-ribose(out) + ATP + H2O = D-ribose(in) + ADP + phosphate + H(+). In terms of biological role, part of the ABC transporter complex RbsABC involved in ribose import. Responsible for energy coupling to the transport system. This chain is Ribose import ATP-binding protein RbsA, found in Streptococcus agalactiae serotype V (strain ATCC BAA-611 / 2603 V/R).